Here is a 229-residue protein sequence, read N- to C-terminus: Urease accessory protein UreF (229 aa).

This sequence belongs to the UreF family. As to quaternary structure, ureD, UreF and UreG form a complex that acts as a GTP-hydrolysis-dependent molecular chaperone, activating the urease apoprotein by helping to assemble the nickel containing metallocenter of UreC. The UreE protein probably delivers the nickel.

It is found in the cytoplasm. In terms of biological role, required for maturation of urease via the functional incorporation of the urease nickel metallocenter. This is Urease accessory protein UreF from Staphylococcus epidermidis (strain ATCC 35984 / DSM 28319 / BCRC 17069 / CCUG 31568 / BM 3577 / RP62A).